We begin with the raw amino-acid sequence, 547 residues long: Chaperonin GroEL 2 (547 aa).

ATP is bound by residues 30-33 (TLGP), Lys51, 87-91 (DGTTT), Gly415, 479-481 (NAA), and Asp495. Residues 528–547 (KPATAGLPHGGPGGFGGPEF) form a disordered region. The segment covering 535–547 (PHGGPGGFGGPEF) has biased composition (gly residues).

It belongs to the chaperonin (HSP60) family. In terms of assembly, forms a cylinder of 14 subunits composed of two heptameric rings stacked back-to-back. Interacts with the co-chaperonin GroES.

It is found in the cytoplasm. The catalysed reaction is ATP + H2O + a folded polypeptide = ADP + phosphate + an unfolded polypeptide.. Together with its co-chaperonin GroES, plays an essential role in assisting protein folding. The GroEL-GroES system forms a nano-cage that allows encapsulation of the non-native substrate proteins and provides a physical environment optimized to promote and accelerate protein folding. The polypeptide is Chaperonin GroEL 2 (Azoarcus sp. (strain BH72)).